Consider the following 784-residue polypeptide: Lon protease (784 aa).

Residues 6 to 207 (LPLMALRDMV…TVITTLTSNI (202 aa)) form the Lon N-terminal domain. 356–363 (GPPGVGKT) is a binding site for ATP. Residues 592–773 (EDQIGSTTGL…DQVLKHALVE (182 aa)) form the Lon proteolytic domain. Residues Ser-679 and Lys-722 contribute to the active site.

This sequence belongs to the peptidase S16 family. In terms of assembly, homohexamer. Organized in a ring with a central cavity.

It is found in the cytoplasm. The catalysed reaction is Hydrolysis of proteins in presence of ATP.. Functionally, ATP-dependent serine protease that mediates the selective degradation of mutant and abnormal proteins as well as certain short-lived regulatory proteins. Required for cellular homeostasis and for survival from DNA damage and developmental changes induced by stress. Degrades polypeptides processively to yield small peptide fragments that are 5 to 10 amino acids long. Binds to DNA in a double-stranded, site-specific manner. The protein is Lon protease of Rickettsia typhi (strain ATCC VR-144 / Wilmington).